Reading from the N-terminus, the 3838-residue chain is Replicase polyprotein 1ab (3838 aa).

The C4-type; atypical zinc finger occupies 8 to 28; sequence CMCTPAARVFWNAGQVFCTRC. The region spanning 69–180 is the Peptidase C31 domain; sequence ECTPSGCCWL…QPFCPFEEAH (112 aa). Residues 69–182 are PCP1-alpha; that stretch reads ECTPSGCCWL…FCPFEEAHSD (114 aa). Catalysis depends on for Nsp1-alpha papain-like cysteine proteinase activity residues C76 and H146. The segment at 203 to 204 is important for host EIF2AK2 inhibition; the sequence is MM. The interval 269-384 is PCP1-beta; it reads PNVFDGKCWL…IFRFGAHKWY (116 aa). The Peptidase C32 domain maps to 269 to 385; sequence PNVFDGKCWL…FRFGAHKWYG (117 aa). Catalysis depends on for Nsp1-beta papain-like cysteine proteinase activity residues C276 and H345. Positions 418–505 are OTU-like; that stretch reads ITTYSPPTDG…GVHWEVEVRS (88 aa). A Peptidase C33 domain is found at 420-527; the sequence is TYSPPTDGSC…VGVCSEGCVA (108 aa). Residues C429 and H498 each act as for Nsp2 cysteine proteinase activity in the active site. Disordered regions lie at residues 728-758 and 1027-1064; these read AIGSAQSSSDSKRENMHNSREDEPLDLSHPA and SVTPPPKSAGLVLDQTVPPPTDIQQEDATPSDGLSHAS. Positions 737-749 are enriched in basic and acidic residues; the sequence is DSKRENMHNSRED. 5 helical membrane-spanning segments follow: residues 1094 to 1114, 1117 to 1137, 1162 to 1182, 1211 to 1231, and 1235 to 1255; these read LMTWVFEVYSHLPAFILTLFS, GSMAPGDWLFAGVVLLALLLC, GVFGSWMAFAVFLFSTPSNPV, GLVVGPSGLLCVILGKLLGGS, and WHVILRLCMLTDLALSLVYVV. The segment at 1132–1255 is HD1; that stretch reads LALLLCRSYP…DLALSLVYVV (124 aa). The segment at 1310-1334 is WCCH; sequence TGWRGCWRGESPIHQPHQKPIAYAN. 4 helical membrane passes run 1450-1470, 1526-1546, 1556-1576, and 1592-1612; these read TLAVAQVSVWTLVHFILGLWF, EVGIFILVLVSLTALAHRLAL, AFCAYAWPMSSWLICFFPILL, and FLVFCMPAAGILSLGITGLLW. Residues 1451–1612 form an HD2 region; sequence LAVAQVSVWT…LSLGITGLLW (162 aa). The Peptidase S32 domain maps to 1677-1879; the sequence is GAFRTHKPCL…SLLASVPVME (203 aa). Residues H1715, D1740, and S1793 each act as charge relay system; for 3C-like serine proteinase activity in the active site. Helical transmembrane passes span 1875 to 1895, 1916 to 1936, 1960 to 1980, 2003 to 2023, and 2029 to 2048; these read VPVMEGGLSTVQLLCVFFLLW, ILPAVLVRAVFSFALFILAWA, LAFYALGGVVGLAAEIGAFAG, SYVPIIIIGGLHALGVILWLF, and HNMLVGDGSFSSAFFLRYFA. Positions 1902–2023 are HD3; the sequence is WTPIVAVGFF…HALGVILWLF (122 aa). The NiRAN domain maps to 2364–2527; that stretch reads IISQLQGLTT…LPYKLYPVRG (164 aa). The 135-residue stretch at 2765 to 2899 folds into the RdRp catalytic domain; it reads AGRCLEADLA…LYAERPTFPN (135 aa). Positions 3021 to 3084 constitute an AV ZBD domain; the sequence is GKKFRHCGIC…SPVGAGRSPL (64 aa). Zn(2+)-binding residues include C3027, C3030, C3040, C3045, H3048, H3050, H3052, H3054, C3061, H3063, C3070, and C3073. Residues 3134–3293 form the (+)RNA virus helicase ATP-binding domain; it reads DLPDGDYQVV…VFDQMPQKQL (160 aa). Position 3168–3175 (3168–3175) interacts with ATP; sequence VGPPGSGK. One can recognise a (+)RNA virus helicase C-terminal domain in the interval 3294-3423; it reads TTIYRFGPNI…FSRGDDLVVL (130 aa). The AV-Nsp11N/CoV-Nsp15M domain maps to 3462 to 3559; the sequence is EGSCMPLPQV…LTLYIRGEPQ (98 aa). Positions 3561–3683 constitute a NendoU domain; that stretch reads LPETLVSTGR…MVWKGATAYF (123 aa). Active-site residues include H3592, H3607, and K3636.

Belongs to the arteriviridae polyprotein family. Nsp1-alpha papain-like: Interacts with host RNF31. As to quaternary structure, interacts with host EIF2AK2; this interaction occurs in host stress granules and leads to EIF2AK2 inhibition. Interacts with host G3BP1; this interaction probably plays a role in Nsp1-beta-mediated inhibition of host EIF2AK2. In terms of assembly, interacts with host DDX18; this interaction redistributes host DDX18 to the cytoplasm. Interacts with host IFITM1. As to quaternary structure, interacts with host DDX5. In terms of assembly, interacts with host OTULIN. Interacts with host LGALS3. Post-translationally, specific enzymatic cleavages in vivo by its own proteases yield mature proteins. Nsp1 is autocleaved into two subunits, Nsp1-alpha and Nsp1-beta. There are two alternative pathways for processing. Either nsp4-5 is cleaved, which represents the major pathway or the nsp5-6 and nsp6-7 are processed, which represents the minor pathway. The major pathway occurs when nsp2 acts as a cofactor for nsp4.

The protein localises to the host nucleus. It localises to the host cytoplasm. Its subcellular location is the host membrane. It is found in the host endoplasmic reticulum. The protein resides in the host perinuclear region. The catalysed reaction is RNA(n) + a ribonucleoside 5'-triphosphate = RNA(n+1) + diphosphate. It carries out the reaction ATP + H2O = ADP + phosphate + H(+). The enzyme catalyses Thiol-dependent hydrolysis of ester, thioester, amide, peptide and isopeptide bonds formed by the C-terminal Gly of ubiquitin (a 76-residue protein attached to proteins as an intracellular targeting signal).. It catalyses the reaction uridylyl-uridylyl-ribonucleotide-RNA = a 3'-end uridylyl-2',3'-cyclophospho-uridine-RNA + a 5'-end dephospho-ribonucleoside-RNA. Contains the activities necessary for the transcription of negative stranded RNA, leader RNA, subgenomic mRNAs and progeny virion RNA as well as proteinases responsible for the cleavage of the polyprotein into functional products. Functionally, inhibits host IFN-beta production. Plays a role in the degradation of the host transcriptional activator CREBBP protein. The degradation of host CREBBP which is a key component of the IFN enhanceosome is likely responsible for the inhibition of interferon mediated by Nsp1-alpha. Also participates in the inhibition of host NF-kappa-B activation by counteracting LUBAC-dependent induction of NF-kappa-B. Reduces host NEMO ubiquitination by blocking the interaction between the two LUBAC complex components RNF31 and SHARPIN. Its function is as follows. Plays a role in blocking host mRNA nuclear export to the cytoplasm and subversion of host protein synthesis. Additionally, inhibits the interferon-activated JAK/STAT signal transduction by mediating the ubiquitination and subsequent proteasomal degradation of host KPNA1. Repurposes the host antiviral stress granules into a proviral platform to counteract the EIF2AK2/PKR restriction, thereby regulating the host inflammatory response. In terms of biological role, multifunctional protein that acts as a viral protease and as a viral antagonist of host immune response. Cleaves the nsp2/nsp3 site in the viral polyprotein. Displays deubiquitinating activity that cleaves both ubiquitinated and ISGylated products and therefore inhibits ubiquitin and ISG15-dependent host innate immunity. Also deubiquinates host NFKBIA, thereby interfering with NFKBIA degradation and impairing subsequent NF-kappa-B activation. Plays a role in the inhibition of the immune response by interacting with host IFITM1. This interaction leads to the proteasomal degradation of the IFN-induced antiviral protein IFITM1. Functionally, cleaves the majority of cleavage sites present in the C-terminus of the polyprotein. Triggers host apoptosis through caspase-3, -8, and -9 activations. Subverts host innate immune responses through its protease activity. Targets the NF-kappa-B essential modulator NEMO and mediates its cleavage. Blocks host interferon beta induction and downstream signaling by cleaving mitochondrial MAVS, dislodging it from the mitochondria. Impairs host defense by cleaving host mRNA-decapping enzyme DCP1A to attenuate its antiviral activity. Its function is as follows. Plays a role in the initial induction of autophagosomes from host endoplasmic reticulum. In terms of biological role, plays a role in the inhibition of host STAT3 signaling pathway by inducing the degradation of STAT3. Responsible for replication and transcription of the viral RNA genome. Functionally, displays RNA and DNA duplex-unwinding activities with 5' to 3' polarity. Its function is as follows. Plays a role in viral transcription/replication and prevents the simultaneous activation of host cell dsRNA sensors, such as MDA5/IFIH1, OAS, PKR and NLRP3 inflammasome. Acts by degrading the 5'-polyuridines generated during replication of the poly(A) region of viral genomic and subgenomic RNAs. Catalyzes a two-step reaction in which a 2'3'-cyclic phosphate (2'3'-cP) is first generated by 2'-O transesterification, which is then hydrolyzed to a 3'-phosphate (3'-P). If not degraded, poly(U) RNA would hybridize with poly(A) RNA tails and activate host dsRNA sensors. Also plays a role in the inhibition of host type I interferon production by recruiting host OTULIN to promote removal of linear ubiquitination targeting host NEMO. The polypeptide is Replicase polyprotein 1ab (Sus scrofa (Pig)).